The chain runs to 93 residues: Transcription factor RADIALIS (93 aa).

One can recognise an SANT domain in the interval 6–61 (GSGRPWSAKENKAFERALAVYDKDTPDRWANVARAVEGRTPEEVKKHYEILVEDIK).

Specifically expressed in the dorsal region of developing flowers.

The protein resides in the nucleus. Involved in the dorsovental asymmetry of flowers. Promotes dorsal identity. The protein is Transcription factor RADIALIS (RAD) of Antirrhinum majus (Garden snapdragon).